Consider the following 941-residue polypeptide: Protein translocase subunit SecA (941 aa).

Residues Q87, 105–109 (GEGKT), and D524 each bind ATP. The tract at residues 871–919 (DEQPPMPAMEAHKLDPNTGEDQVAQAQSGLAPVAPAKRDPANPATWGKV) is disordered. Zn(2+)-binding residues include C925, C927, C936, and H937.

Belongs to the SecA family. As to quaternary structure, monomer and homodimer. Part of the essential Sec protein translocation apparatus which comprises SecA, SecYEG and auxiliary proteins SecDF-YajC and YidC. Zn(2+) serves as cofactor.

It is found in the cell inner membrane. The protein localises to the cytoplasm. The catalysed reaction is ATP + H2O + cellular proteinSide 1 = ADP + phosphate + cellular proteinSide 2.. Part of the Sec protein translocase complex. Interacts with the SecYEG preprotein conducting channel. Has a central role in coupling the hydrolysis of ATP to the transfer of proteins into and across the cell membrane, serving both as a receptor for the preprotein-SecB complex and as an ATP-driven molecular motor driving the stepwise translocation of polypeptide chains across the membrane. The protein is Protein translocase subunit SecA of Afipia carboxidovorans (strain ATCC 49405 / DSM 1227 / KCTC 32145 / OM5) (Oligotropha carboxidovorans).